The primary structure comprises 428 residues: MSIMKKRSSRAADPDELLCCCEYIDRHGSRSHMVACCCDCEDLDEACDRWMNKEPQNPDSVSRALATINDRLRVPWISGARQIDVSLIPPLILLPVFLHIAALHYLLGIIMLTAMPITVLWYYFFTHRKKGRTLFFLGLALFSLFYMFYLFLTQVVPRGEVTELQLAVVTAGVALTVIFLMLTKRGPGLVRPRPSETHSTVTYHSTPPDVDGVYLNGARHQVVIGSRVASSEHTGEPGTEEEEEGVQKRNWCAVCKVVRPQRAGHCRICGVCVLRLDHHCVWINSCVGLANHRTFLLTLLFFLLTSIYGISLVLASVCPDQRVLTALFYCPDVYSQYSSALCFTCAWYSSIVTGGLLHLLLLQILNISLNVTEREARLALREKSAQRRLWGLIVHTGHYSRGFWSNWTEFLTMTEDTQPAGHKTEDLV.

Topologically, residues 1–82 (MSIMKKRSSR…RVPWISGARQ (82 aa)) are cytoplasmic. A helical transmembrane segment spans residues 83-99 (IDVSLIPPLILLPVFLH). The Lumenal segment spans residues 100-105 (IAALHY). A helical transmembrane segment spans residues 106–125 (LLGIIMLTAMPITVLWYYFF). Topologically, residues 126–132 (THRKKGR) are cytoplasmic. A helical membrane pass occupies residues 133 to 153 (TLFFLGLALFSLFYMFYLFLT). Over 154-160 (QVVPRGE) the chain is Lumenal. The chain crosses the membrane as a helical span at residues 161-181 (VTELQLAVVTAGVALTVIFLM). Residues 182–294 (LTKRGPGLVR…SCVGLANHRT (113 aa)) are Cytoplasmic-facing. A DHHC domain is found at 250 to 300 (NWCAVCKVVRPQRAGHCRICGVCVLRLDHHCVWINSCVGLANHRTFLLTLL). The active-site S-palmitoyl cysteine intermediate is the Cys280. The helical transmembrane segment at 295 to 315 (FLLTLLFFLLTSIYGISLVLA) threads the bilayer. The Lumenal portion of the chain corresponds to 316 to 350 (SVCPDQRVLTALFYCPDVYSQYSSALCFTCAWYSS). The chain crosses the membrane as a helical span at residues 351-371 (IVTGGLLHLLLLQILNISLNV). The Cytoplasmic portion of the chain corresponds to 372-428 (TEREARLALREKSAQRRLWGLIVHTGHYSRGFWSNWTEFLTMTEDTQPAGHKTEDLV).

The protein belongs to the DHHC palmitoyltransferase family.

It localises to the golgi apparatus membrane. The protein resides in the golgi apparatus. Its subcellular location is the trans-Golgi network membrane. It catalyses the reaction L-cysteinyl-[protein] + hexadecanoyl-CoA = S-hexadecanoyl-L-cysteinyl-[protein] + CoA. Palmitoyltransferase that could catalyze the addition of palmitate onto various protein substrates and be involved in a variety of cellular processes. This is Palmitoyltransferase ZDHHC23-B from Danio rerio (Zebrafish).